The primary structure comprises 873 residues: Leucine--tRNA ligase (873 aa).

A 'HIGH' region motif is present at residues 43–53 (PYPSGSLHMGH). Positions 624–628 (TMSKS) match the 'KMSKS' region motif. Residue K627 coordinates ATP.

Belongs to the class-I aminoacyl-tRNA synthetase family.

It is found in the cytoplasm. The enzyme catalyses tRNA(Leu) + L-leucine + ATP = L-leucyl-tRNA(Leu) + AMP + diphosphate. This is Leucine--tRNA ligase from Synechococcus sp. (strain JA-3-3Ab) (Cyanobacteria bacterium Yellowstone A-Prime).